A 447-amino-acid polypeptide reads, in one-letter code: uncharacterized protein (447 aa).

The 173-residue stretch at 29 to 201 (VDVYPLVFVF…TQYTFKVHRA (173 aa)) folds into the FAD-binding PCMH-type domain.

The protein belongs to the oxygen-dependent FAD-linked oxidoreductase family. The cofactor is FAD.

It localises to the spore coat. This is an uncharacterized protein from Bacillus subtilis (strain 168).